We begin with the raw amino-acid sequence, 140 residues long: Small ribosomal subunit protein uS19 (140 aa).

The protein belongs to the universal ribosomal protein uS19 family.

In terms of biological role, protein S19 forms a complex with S13 that binds strongly to the 16S ribosomal RNA. The chain is Small ribosomal subunit protein uS19 from Methanocella arvoryzae (strain DSM 22066 / NBRC 105507 / MRE50).